We begin with the raw amino-acid sequence, 29 residues long: Cytochrome b6-f complex subunit 8 (29 aa).

The chain crosses the membrane as a helical span at residues 3-23 (ILSISWAFLMVVFTFSLSLVV).

Belongs to the PetN family. In terms of assembly, the 4 large subunits of the cytochrome b6-f complex are cytochrome b6, subunit IV (17 kDa polypeptide, PetD), cytochrome f and the Rieske protein, while the 4 small subunits are PetG, PetL, PetM and PetN. The complex functions as a dimer.

It is found in the plastid. Its subcellular location is the chloroplast thylakoid membrane. Component of the cytochrome b6-f complex, which mediates electron transfer between photosystem II (PSII) and photosystem I (PSI), cyclic electron flow around PSI, and state transitions. This chain is Cytochrome b6-f complex subunit 8, found in Chara vulgaris (Common stonewort).